The sequence spans 216 residues: TATA-box-binding protein-like 1 (216 aa).

Tandem repeats lie at residues 38–121 (KPVI…QRLG) and 126–210 (FNHF…ILLQ).

Belongs to the TBP family.

The protein localises to the nucleus. Functionally, TATA box-binding transcription factor. Members of the TBP family are differentially required to regulate transcription and development during early embryogenesis. The sequence is that of TATA-box-binding protein-like 1 (trf1) from Entamoeba histolytica (strain ATCC 30459 / HM-1:IMSS / ABRM).